The primary structure comprises 170 residues: Cathelicidin antimicrobial peptide (170 aa).

The first 30 residues, 1-30, serve as a signal peptide directing secretion; it reads MKTQRDGPSLGRWSLLLLLLGLTMPLAVIG. The propeptide at 31–131 is cathelin-like domain (CLD); the sequence is RVLSYQEAVL…DISCDKDKRK (101 aa). Residues 31-131 form a cathelin-like domain (CLD) region; it reads RVLSYQEAVL…DISCDKDKRK (101 aa). Intrachain disulfides connect Cys86-Cys97 and Cys108-Cys125. The tract at residues 150-162 is active core; that stretch reads LKKIGQKIKDFFG.

Belongs to the cathelicidin family. As to quaternary structure, monomer, homodimer or homotrimer (in vitro). Oligomerizes as tetra- or hexamer in solution (in vitro). In terms of processing, proteolytically cleaved by proteinase PRTN3 into antibacterial peptide LL-37. Proteolytically cleaved by cathepsin CTSG and neutrophil elastase ELANE. Post-translationally, resistant to proteolytic degradation in solution, and when bound to both zwitterionic (mimicking mammalian membranes) and negatively charged membranes (mimicking bacterial membranes). After secretion onto the skin surface, the CAMP gene product is processed by a serine protease-dependent mechanism into multiple novel antimicrobial peptides distinct from and shorter than cathelicidin LL-37. These peptides show enhanced antimicrobial action, acquiring the ability to kill skin pathogens such as S.aureus, E.coli and C.albicans. These peptides have lost the ability to stimulate CXCL8/IL8 release from keratinocytes. The peptides act synergistically, killing bacteria at lower concentrations when present together, and maintain activity at increased salt condition.

It localises to the secreted. It is found in the vesicle. Its function is as follows. Antimicrobial protein that is an integral component of the innate immune system. Binds to bacterial lipopolysaccharides (LPS). Acts via neutrophil N-formyl peptide receptors to enhance the release of CXCL2. Postsecretory processing generates multiple cathelicidin antimicrobial peptides with various lengths which act as a topical antimicrobial defense in sweat on skin. The unprocessed precursor form, cathelicidin antimicrobial peptide, inhibits the growth of Gram-negative E.coli and E.aerogenes with efficiencies comparable to that of the mature peptide LL-37 (in vitro). Antimicrobial peptide that is an integral component of the innate immune system. Binds to bacterial lipopolysaccharides (LPS). Causes membrane permeabilization by forming transmembrane pores (in vitro). Causes lysis of E.coli. Exhibits antimicrobial activity against Gram-negative bacteria such as P.aeruginosa, S.typhimurium, E.aerogenes, E.coli and P.syringae, Gram-positive bacteria such as L.monocytogenes, S.epidermidis, S.pyogenes and S.aureus, as well as vancomycin-resistant enterococci (in vitro). Exhibits antimicrobial activity against methicillin-resistant S.aureus, P.mirabilis, and C.albicans in low-salt media, but not in media containing 100 mM NaCl (in vitro). Forms chiral supramolecular assemblies with quinolone signal (PQS) molecules of P.aeruginosa, which may lead to interference of bacterial quorum signaling and perturbance of bacterial biofilm formation. May form supramolecular fiber-like assemblies on bacterial membranes. Induces cytokine and chemokine producation as well as TNF/TNFA and CSF2/GMCSF production in normal human keratinocytes. Exhibits hemolytic activity against red blood cells. In terms of biological role, exhibits antimicrobial activity against E.coli and B.megaterium (in vitro). This is Cathelicidin antimicrobial peptide from Saguinus oedipus (Cotton-top tamarin).